A 269-amino-acid chain; its full sequence is Phosphate import ATP-binding protein PstB 1 (269 aa).

Residues 25 to 264 enclose the ABC transporter domain; sequence LSTEDLHVFY…PQVDLTNDYI (240 aa). 57-64 is a binding site for ATP; that stretch reads GPSGSGKS.

This sequence belongs to the ABC transporter superfamily. Phosphate importer (TC 3.A.1.7) family. In terms of assembly, the complex is composed of two ATP-binding proteins (PstB), two transmembrane proteins (PstC and PstA) and a solute-binding protein (PstS).

The protein localises to the cell membrane. It catalyses the reaction phosphate(out) + ATP + H2O = ADP + 2 phosphate(in) + H(+). In terms of biological role, part of the ABC transporter complex PstSACB involved in phosphate import. Responsible for energy coupling to the transport system. This is Phosphate import ATP-binding protein PstB 1 from Lactiplantibacillus plantarum (strain ATCC BAA-793 / NCIMB 8826 / WCFS1) (Lactobacillus plantarum).